The chain runs to 1235 residues: ATP-dependent helicase/nuclease subunit A (1235 aa).

Residues 10-482 (SIWTDDQWSA…IDLNQNFRSR (473 aa)) enclose the UvrD-like helicase ATP-binding domain. An ATP-binding site is contributed by 31–38 (AAAGSGKT). Positions 509-799 (QAALKLGASY…RLMTIHSSKG (291 aa)) constitute a UvrD-like helicase C-terminal domain.

It belongs to the helicase family. AddA subfamily. As to quaternary structure, heterodimer of AddA and AddB/RexB. Mg(2+) serves as cofactor.

The enzyme catalyses Couples ATP hydrolysis with the unwinding of duplex DNA by translocating in the 3'-5' direction.. It carries out the reaction ATP + H2O = ADP + phosphate + H(+). Functionally, the heterodimer acts as both an ATP-dependent DNA helicase and an ATP-dependent, dual-direction single-stranded exonuclease. Recognizes the chi site generating a DNA molecule suitable for the initiation of homologous recombination. The AddA nuclease domain is required for chi fragment generation; this subunit has the helicase and 3' -&gt; 5' nuclease activities. This chain is ATP-dependent helicase/nuclease subunit A, found in Bacillus velezensis (strain DSM 23117 / BGSC 10A6 / LMG 26770 / FZB42) (Bacillus amyloliquefaciens subsp. plantarum).